Consider the following 234-residue polypeptide: R-spondin-4 (234 aa).

Residues 1–19 form the signal peptide; sequence MRAPLCLLLLVAHAVDMLA. N-linked (GlcNAc...) asparagine glycosylation occurs at N34. 11 disulfides stabilise this stretch: C35/C41, C38/C47, C50/C69, C73/C88, C91/C98, C95/C104, C107/C118, C122/C135, C139/C181, C150/C157, and C190/C196. Residues 85–128 form an FU repeat; the sequence is VNRCKKCGATCESCFSQDFCIRCKRQFYLYKGKCLPTCPPGTLA. Residues 138 to 197 form the TSP type-1 domain; sequence ECELGPWGGWSPCTHNGKTCGSAWGLESRVREAGRAGHEEAATCQVLSESRKCPIQRPCP. Residues 190 to 234 are disordered; the sequence is CPIQRPCPGERSPGQKKGRKDRRPRKDRKLDRRLDVRPRQPGLQP. The span at 203-216 shows a compositional bias: basic residues; it reads GQKKGRKDRRPRKD. A compositionally biased stretch (basic and acidic residues) spans 217-227; it reads RKLDRRLDVRP.

This sequence belongs to the R-spondin family. Binds heparin. Interacts with LGR4, LGR5 and LGR6. In terms of processing, tyr-112 may be phosphorylated; however as this position is probably extracellular, the vivo relevance is not proven.

The protein resides in the secreted. Functionally, activator of the canonical Wnt signaling pathway by acting as a ligand for LGR4-6 receptors. Upon binding to LGR4-6 (LGR4, LGR5 or LGR6), LGR4-6 associate with phosphorylated LRP6 and frizzled receptors that are activated by extracellular Wnt receptors, triggering the canonical Wnt signaling pathway to increase expression of target genes. Also regulates the canonical Wnt/beta-catenin-dependent pathway and non-canonical Wnt signaling by acting as an inhibitor of ZNRF3, an important regulator of the Wnt signaling pathway. This is R-spondin-4 (RSPO4) from Homo sapiens (Human).